The following is a 327-amino-acid chain: GMP reductase (327 aa).

C176 (thioimidate intermediate) is an active-site residue. 205 to 228 (IIADGGIRTHGDIAKSIRFGATMV) is an NADP(+) binding site.

The protein belongs to the IMPDH/GMPR family. GuaC type 2 subfamily.

The catalysed reaction is IMP + NH4(+) + NADP(+) = GMP + NADPH + 2 H(+). Its function is as follows. Catalyzes the irreversible NADPH-dependent deamination of GMP to IMP. It functions in the conversion of nucleobase, nucleoside and nucleotide derivatives of G to A nucleotides, and in maintaining the intracellular balance of A and G nucleotides. This is GMP reductase from Streptococcus equi subsp. equi (strain 4047).